The following is a 298-amino-acid chain: MNQEVKSGKVLSPSTPWTQRPVPGIEVADEQQTLKATFTEPTIECPECHALVTRTAISFNAYVCPQCDEHLRMKARDRLNWFFDNVVAELGQEFSAKDPLKFVDSKPYPDRMREAQTKTGETEALIAMQGNLNGVDMIACAFEFDFMGGSMGTVVGDRFVKAAELAIEKRQPLICFAASGGARMQEGMLSLMQMARTSAAIQKLKDAGLPYIVVLTHPVYGGVTASLAMLGDIHIAEPKAMIGFAGKRVIEQTVRETLEEPFQRAEYLLDHGVVDQIVHRHALRDTVSRLVSKLMNLP.

Positions 1–21 (MNQEVKSGKVLSPSTPWTQRP) are disordered. One can recognise a CoA carboxyltransferase N-terminal domain in the interval 41–298 (PTIECPECHA…RLVSKLMNLP (258 aa)). Zn(2+) is bound by residues cysteine 45, cysteine 48, cysteine 64, and cysteine 67. The C4-type zinc finger occupies 45–67 (CPECHALVTRTAISFNAYVCPQC).

It belongs to the AccD/PCCB family. Acetyl-CoA carboxylase is a heterohexamer composed of biotin carboxyl carrier protein (AccB), biotin carboxylase (AccC) and two subunits each of ACCase subunit alpha (AccA) and ACCase subunit beta (AccD). Zn(2+) is required as a cofactor.

Its subcellular location is the cytoplasm. The catalysed reaction is N(6)-carboxybiotinyl-L-lysyl-[protein] + acetyl-CoA = N(6)-biotinyl-L-lysyl-[protein] + malonyl-CoA. The protein operates within lipid metabolism; malonyl-CoA biosynthesis; malonyl-CoA from acetyl-CoA: step 1/1. Component of the acetyl coenzyme A carboxylase (ACC) complex. Biotin carboxylase (BC) catalyzes the carboxylation of biotin on its carrier protein (BCCP) and then the CO(2) group is transferred by the transcarboxylase to acetyl-CoA to form malonyl-CoA. The polypeptide is Acetyl-coenzyme A carboxylase carboxyl transferase subunit beta (Acinetobacter baumannii (strain AYE)).